We begin with the raw amino-acid sequence, 504 residues long: ATP synthase subunit alpha (504 aa).

169–176 (GDRQTGKT) is an ATP binding site.

Belongs to the ATPase alpha/beta chains family. In terms of assembly, F-type ATPases have 2 components, CF(1) - the catalytic core - and CF(0) - the membrane proton channel. CF(1) has five subunits: alpha(3), beta(3), gamma(1), delta(1), epsilon(1). CF(0) has three main subunits: a(1), b(2) and c(9-12). The alpha and beta chains form an alternating ring which encloses part of the gamma chain. CF(1) is attached to CF(0) by a central stalk formed by the gamma and epsilon chains, while a peripheral stalk is formed by the delta and b chains.

The protein resides in the cell membrane. It carries out the reaction ATP + H2O + 4 H(+)(in) = ADP + phosphate + 5 H(+)(out). Functionally, produces ATP from ADP in the presence of a proton gradient across the membrane. The alpha chain is a regulatory subunit. The sequence is that of ATP synthase subunit alpha from Clostridium botulinum (strain ATCC 19397 / Type A).